The following is a 221-amino-acid chain: tRNA (guanine-N(7)-)-methyltransferase (221 aa).

Positions 51, 76, 103, and 125 each coordinate S-adenosyl-L-methionine. The active site involves D125. The substrate site is built by K129 and D161.

The protein belongs to the class I-like SAM-binding methyltransferase superfamily. TrmB family.

It carries out the reaction guanosine(46) in tRNA + S-adenosyl-L-methionine = N(7)-methylguanosine(46) in tRNA + S-adenosyl-L-homocysteine. It functions in the pathway tRNA modification; N(7)-methylguanine-tRNA biosynthesis. Functionally, catalyzes the formation of N(7)-methylguanine at position 46 (m7G46) in tRNA. This chain is tRNA (guanine-N(7)-)-methyltransferase, found in Wolbachia pipientis wMel.